Reading from the N-terminus, the 165-residue chain is Group 10 secretory phospholipase A2 (165 aa).

An N-terminal signal peptide occupies residues 1–31 (MGPLPVCLPIMLLLLLPSLLLLLLLPGPGSG). Positions 32–42 (EASRILRVHRR) are excised as a propeptide. Intrachain disulfides connect Cys53/Cys111, Cys67/Cys157, Cys69/Cys85, Cys84/Cys139, Cys90/Cys164, Cys91/Cys132, Cys100/Cys125, and Cys118/Cys130. Ca(2+)-binding residues include Phe68, Gly70, and Gly72. The active site involves His88. Asp89 contributes to the Ca(2+) binding site. N-linked (GlcNAc...) asparagine glycosylation is present at Asn113. The active site involves Asp133.

The protein belongs to the phospholipase A2 family. Interacts with PLA2R1; this interaction mediates PLA2G10 clearance and inactivation. Ca(2+) is required as a cofactor. As to expression, found in spleen, thymus, peripheral blood leukocytes, pancreas, lung, and colon. Expressed in neuronal fibers in dorsal root ganglia and in peripheral tissues including stomach, white adipose tissue and prostate (at protein level).

It localises to the secreted. It is found in the lysosome. The protein resides in the cytoplasmic vesicle. The protein localises to the secretory vesicle. Its subcellular location is the acrosome. It carries out the reaction a 1,2-diacyl-sn-glycero-3-phosphocholine + H2O = a 1-acyl-sn-glycero-3-phosphocholine + a fatty acid + H(+). The enzyme catalyses 1-hexadecanoyl-2-(9Z-octadecenoyl)-sn-glycero-3-phosphocholine + H2O = 1-hexadecanoyl-sn-glycero-3-phosphocholine + (9Z)-octadecenoate + H(+). The catalysed reaction is 1-octadecanoyl-2-(5Z,8Z,11Z,14Z-eicosatetraenoyl)-sn-glycero-3-phosphocholine + H2O = 1-octadecanoyl-sn-glycero-3-phosphocholine + (5Z,8Z,11Z,14Z)-eicosatetraenoate + H(+). It catalyses the reaction 1,2-dihexadecanoyl-sn-glycero-3-phosphocholine + H2O = 1-hexadecanoyl-sn-glycero-3-phosphocholine + hexadecanoate + H(+). It carries out the reaction 1-hexadecanoyl-2-(9Z-octadecenoyl)-sn-glycero-3-phosphoglycerol + H2O = 1-hexadecanoyl-sn-glycero-3-phosphoglycerol + (9Z)-octadecenoate + H(+). The enzyme catalyses 1,2-dihexadecanoyl-sn-glycero-3-phospho-(1'-sn-glycerol) + H2O = 1-hexadecanoyl-sn-glycero-3-phospho-(1'-sn-glycerol) + hexadecanoate + H(+). The catalysed reaction is 1-hexadecanoyl-2-(9Z-octadecenoyl)-sn-glycero-3-phospho-L-serine + H2O = 1-hexadecanoyl-sn-glycero-3-phospho-L-serine + (9Z)-octadecenoate + H(+). It catalyses the reaction 1-hexadecanoyl-2-(9Z,12Z-octadecadienoyl)-sn-glycero-3-phosphoethanolamine + H2O = 1-hexadecanoyl-sn-glycero-3-phosphoethanolamine + (9Z,12Z)-octadecadienoate + H(+). It carries out the reaction 1-hexadecanoyl-2-(9Z-octadecenoyl)-sn-glycero-3-phosphate + H2O = 1-hexadecanoyl-sn-glycero-3-phosphate + (9Z)-octadecenoate + H(+). The enzyme catalyses 1-O-hexadecyl-2-acetyl-sn-glycero-3-phosphocholine + H2O = 1-O-hexadecyl-sn-glycero-3-phosphocholine + acetate + H(+). With respect to regulation, inhibited by methyl indoxam. Functionally, secretory calcium-dependent phospholipase A2 that primarily targets extracellular phospholipids. Hydrolyzes the ester bond of the fatty acyl group attached at sn-2 position of phospholipids with preference for phosphatidylcholines and phosphatidylglycerols over phosphatidylethanolamines. Preferentially releases sn-2 omega-6 and omega-3 polyunsaturated fatty acyl (PUFA) chains over saturated fatty acyls. Contributes to phospholipid remodeling of very low-density lipoprotein (VLDL), low-density lipoprotein (LDL) and high-density lipoprotein (HDL) particles. Hydrolyzes LDL phospholipids releasing unsaturated fatty acids that regulate macrophage differentiation toward foam cells. Efficiently hydrolyzes and inactivates platelet activating factor (PAF), a potent lipid mediator present in oxidized LDL. May act in an autocrine and paracrine manner. Secreted by lung epithelium, targets membrane phospholipids of infiltrating eosinophils, releasing arachidonate and boosting eicosanoid and cysteinyl leukotriene synthesis involved in airway inflammatory response. Secreted by gut epithelium, hydrolyzes dietary and biliary phosphatidylcholines in the gastrointestinal lumen. Plays a stem cell regulator role in colon epithelium. Within intracellular compartment, mediates Paneth-like cell differentiation and its stem cell supporting functions by inhibiting the Wnt signaling pathway in intestinal stem cell (ISC). Secreted in the intestinal lumen upon inflammation, acts in an autocrine way and promotes prostaglandin E2 synthesis that stimulates Wnt signaling pathway in ISCs and tissue regeneration. May participate in hair follicle morphogenesis by regulating phosphatidylethanolamines metabolism at the outermost epithelial layer and facilitating melanin synthesis. By releasing lysophosphatidylcholines (LPCs) at sperm acrosome, controls sperm cell capacitation, acrosome reaction and overall fertility. May promote neurite outgrowth in neuron fibers involved in nociception. Contributes to lipid remodeling of cellular membranes and generation of lipid mediators involved in pathogen clearance. Cleaves sn-2 fatty acyl chains of phosphatidylglycerols and phosphatidylethanolamines, which are major components of membrane phospholipids in bacteria. Displays bactericidal activity against Gram-positive bacteria by directly hydrolyzing phospholipids of the bacterial membrane. In pulmonary epithelium, may contribute to host defense response against adenoviral infection. Prevents adenovirus entry into host cells by hydrolyzing host cell plasma membrane, releasing C16:0 LPCs that inhibit virus-mediated membrane fusion and viral infection. Likely prevents adenoviral entry into the endosomes of host cells. May play a role in maturation and activation of innate immune cells including macrophages, group 2 innate lymphoid cells and mast cells. The chain is Group 10 secretory phospholipase A2 (PLA2G10) from Homo sapiens (Human).